Reading from the N-terminus, the 72-residue chain is Conotoxin Ep11.1 (72 aa).

The first 19 residues, 1–19 (MKLCVTFLLILVILPSVTG), serve as a signal peptide directing secretion. Positions 20-32 (EKSSKRTLSGAAL) are excised as a propeptide. 4 disulfides stabilise this stretch: cysteine 39-cysteine 53, cysteine 46-cysteine 58, cysteine 52-cysteine 63, and cysteine 57-cysteine 70.

Belongs to the conotoxin I1 superfamily. In terms of tissue distribution, expressed by the venom duct.

It is found in the secreted. This Conus episcopatus (Bishop's cone) protein is Conotoxin Ep11.1.